The sequence spans 104 residues: Antitoxin HigA-2 (104 aa).

Positions 45–98 (IVSIREQFNMSRGVFARLLHTSSRTLENWEQGRSVPNGQAVTLLKLVQRHPETL) constitute an HTH cro/C1-type domain. Positions 56 to 75 (RGVFARLLHTSSRTLENWEQ) form a DNA-binding region, H-T-H motif.

Functionally, antitoxin component of a type II toxin-antitoxin (TA) system that counteracts the effect of the HigB-2 toxin. Binds to its own promoter and regulates transcription of the higB-2/higA-2 operon. This is Antitoxin HigA-2 (higA-2) from Vibrio cholerae serotype O1 (strain ATCC 39315 / El Tor Inaba N16961).